Consider the following 146-residue polypeptide: Mite group 2 allergen Der f 2 (146 aa).

An N-terminal signal peptide occupies residues 1–17 (MISKILCLSLLVAAVVA). 3 disulfides stabilise this stretch: Cys-25/Cys-136, Cys-38/Cys-44, and Cys-90/Cys-95.

This sequence belongs to the NPC2 family.

The protein localises to the secreted. This chain is Mite group 2 allergen Der f 2 (DERF2), found in Dermatophagoides farinae (American house dust mite).